The sequence spans 615 residues: MFS-type transporter 1 (615 aa).

Residues 1–85 (MTALAAVPDL…GNNVSPHGRH (85 aa)) form a disordered region. The span at 16–53 (PSTTTVHSPNYSGSPADISSSPTTRAVSRNTARQTASA) shows a compositional bias: polar residues. The N-linked (GlcNAc...) asparagine glycan is linked to N25. 6 helical membrane passes run 94-114 (CLVIATLSGVSFLNTMGSGIL), 138-158 (VYSLAAGCTLLVFGAVGHIIG), 162-182 (VWITGACLYAAFTLGVGRSAT), 192-212 (VLGVSIAMCLPTAVSLTTNGF), 222-242 (FAFQGMGQPLGYSTGLILGGI), and 251-271 (FGFYISGGINAVLAICALVVL). An N-linked (GlcNAc...) asparagine glycan is attached at N302. The next 8 membrane-spanning stretches (helical) occupy residues 320–340 (WTGTLAISASMGFLSYVFSVV), 351–371 (QNIALLVAAALLLPTFTLWVG), 397–417 (AAVFFTWAVFNAFQYFSALYF), 432–452 (FLPMVLVGAATNIVTGYLVET), 455–475 (VRWLVVVSAIFSLFSPLIMAL), 488–508 (FAMLLSPLHPDVLFTVSNLII), 522–542 (AVFNAVSQVGNSVGLGLTAVV), and 585–605 (AAFWLMFGAAALVTVITFLGL).

Belongs to the major facilitator superfamily. EmrB family.

Its subcellular location is the membrane. Its function is as follows. MFS-type transporter; part of the gene cluster that mediates the biosynthesis of pyriculol and pyriculariol, two heptaketides that induce lesion formation upon application on rice leaves but are dispensable for pathogenicity. With the ABC transporter ABC7, is most likely responsible for pyriculol and pyriculariol secretion and thereby may contribute to intrinsic resistance. The chain is MFS-type transporter 1 from Pyricularia oryzae (strain 70-15 / ATCC MYA-4617 / FGSC 8958) (Rice blast fungus).